The chain runs to 184 residues: UPF0149 protein PSEEN5316 (184 aa).

Belongs to the UPF0149 family.

The chain is UPF0149 protein PSEEN5316 from Pseudomonas entomophila (strain L48).